Here is a 358-residue protein sequence, read N- to C-terminus: Cyclin-D1-binding protein 1 (358 aa).

Interaction with TCF3 regions lie at residues 1–183 (MESA…VDLV) and 149–358 (ISYN…EVES). Interaction with RPLP0 stretches follow at residues 1–189 (MESA…AHEE) and 238–358 (LIIP…EVES). Residues 1 to 207 (MESAAVSAAP…DPYCGLLNDI (207 aa)) are required for interaction with CCND1.

Belongs to the CCNDBP1 family. Interacts with CCND1 and GRAP2. May also interact with COPS5, RPLP0, SIRT6, SYF2 and TCF3. Phosphorylated.

It localises to the cytoplasm. The protein resides in the nucleus. Functionally, may negatively regulate cell cycle progression. May act at least in part via inhibition of the cyclin-D1/CDK4 complex, thereby preventing phosphorylation of RB1 and blocking E2F-dependent transcription. The protein is Cyclin-D1-binding protein 1 (CCNDBP1) of Bos taurus (Bovine).